A 276-amino-acid chain; its full sequence is Adenylyl-sulfate kinase 1, chloroplastic (276 aa).

The transit peptide at 1–38 (MIAAGAKSLLGLSMASPKGIFDSNSMSNSRSVVVVRAC) directs the protein to the chloroplast. The segment at 46–74 (TLSHNKNGSIPEVKSINGHTGQKQGPLST) is disordered. A compositionally biased stretch (polar residues) spans 62 to 74 (NGHTGQKQGPLST). 108–116 (GLSGSGKST) lines the ATP pocket. Residues D138, R141, R155, N158, 181–182 (IS), and G231 each bind substrate. Catalysis depends on S182, which acts as the Phosphoserine intermediate.

The protein belongs to the APS kinase family. Homodimer; disulfide-linked. Interacts with APK2. In terms of tissue distribution, expressed in root vasculature, root tips, leaf epidermal and guard cells, pollen grains and funiculus of developing seeds.

Its subcellular location is the plastid. It is found in the chloroplast. The catalysed reaction is adenosine 5'-phosphosulfate + ATP = 3'-phosphoadenylyl sulfate + ADP + H(+). It functions in the pathway sulfur metabolism; hydrogen sulfide biosynthesis; sulfite from sulfate: step 2/3. Its function is as follows. Catalyzes the synthesis of activated sulfate. Essential for plant reproduction and viability. Required for the production of glucosinolates. The sequence is that of Adenylyl-sulfate kinase 1, chloroplastic (APK1) from Arabidopsis thaliana (Mouse-ear cress).